Reading from the N-terminus, the 486-residue chain is Homoserine O-acetyltransferase (486 aa).

The region spanning 66 to 436 (NVLVICHALT…PEGHDAFLLE (371 aa)) is the AB hydrolase-1 domain. Ser162 acts as the Nucleophile in catalysis. The segment at 248–281 (KFSRRSPSIAQQQKAQREETRKPSTVSEHSLQIH) is disordered. Composition is skewed to polar residues over residues 250-261 (SRRSPSIAQQQK) and 270-280 (PSTVSEHSLQI). Active-site residues include Asp401 and His430.

The protein belongs to the AB hydrolase superfamily. MetX family.

The protein localises to the cytoplasm. The catalysed reaction is L-homoserine + acetyl-CoA = O-acetyl-L-homoserine + CoA. The protein operates within amino-acid biosynthesis; L-methionine biosynthesis via de novo pathway; O-acetyl-L-homoserine from L-homoserine: step 1/1. Commits homoserine to the methionine biosynthesis pathway by catalyzing its O-acetylation. This is Homoserine O-acetyltransferase (MET2) from Saccharomyces cerevisiae (strain ATCC 204508 / S288c) (Baker's yeast).